The chain runs to 336 residues: Dihydroorotate dehydrogenase (quinone) (336 aa).

Residues 62 to 66 (AGLDK) and threonine 86 contribute to the FMN site. Lysine 66 provides a ligand contact to substrate. 111–115 (NRMGF) serves as a coordination point for substrate. FMN is bound by residues asparagine 139 and asparagine 172. Asparagine 172 provides a ligand contact to substrate. Serine 175 (nucleophile) is an active-site residue. Asparagine 177 contributes to the substrate binding site. FMN is bound by residues lysine 217 and threonine 245. 246-247 (NT) provides a ligand contact to substrate. Residues glycine 268, glycine 297, and 318–319 (YS) each bind FMN.

It belongs to the dihydroorotate dehydrogenase family. Type 2 subfamily. In terms of assembly, monomer. FMN is required as a cofactor.

Its subcellular location is the cell membrane. It carries out the reaction (S)-dihydroorotate + a quinone = orotate + a quinol. The protein operates within pyrimidine metabolism; UMP biosynthesis via de novo pathway; orotate from (S)-dihydroorotate (quinone route): step 1/1. Its function is as follows. Catalyzes the conversion of dihydroorotate to orotate with quinone as electron acceptor. This Sodalis glossinidius (strain morsitans) protein is Dihydroorotate dehydrogenase (quinone).